We begin with the raw amino-acid sequence, 667 residues long: Holliday junction recognition protein (667 aa).

Residues 78 to 126 are disordered; it reads LNGQAPEGDSESSGADTSLEENWPSCSSAMREASGDPRQRQPAVPGNTL. Phosphoserine occurs at positions 169, 185, and 195. Disordered regions lie at residues 181 to 201 and 279 to 317; these read ISAK…GQGP and RRRP…EPGK. Over residues 279–297 the composition is skewed to basic residues; it reads RRRPSRKQGLHKNRTHCPR. Phosphoserine occurs at positions 388, 424, 449, and 462. Positions 443–530 are disordered; it reads YRSGSKSPGS…NSEPTGKAVW (88 aa). Basic and acidic residues predominate over residues 466–482; it reads GREKTERPGEALEDLRG. The span at 496-515 shows a compositional bias: low complexity; the sequence is SCPSPEGSPSRSPSHSQLSS. A Glycyl lysine isopeptide (Lys-Gly) (interchain with G-Cter in SUMO2) cross-link involves residue K554. Phosphoserine is present on S567. The segment at 596–617 is disordered; the sequence is KRLNPDSPQQSSQKRSISPGCH. A compositionally biased stretch (polar residues) spans 601–611; that stretch reads DSPQQSSQKRS. Position 613 is a phosphoserine (S613).

Interacts with CENPA (via CATD domain); the interaction is direct and specific for CENPA since it does not interact with H3.1- or H3.3-containing nucleosomes. Heterotrimer composed of HJURP, CENPA and histone H4, where HJURP interacts with the dimer formed by CENPA and histone H4 and prevents tetramerization of CENPA and H4. Identified in a centromere complex containing histones H2A, H2B and H4, and at least CENPA, CENPB, CENPC, CENPT, CENPN, HJURP, SUPT16H, SSRP1 and RSF1. Interacts with 14-3-3 family members in a phosphorylation-dependent manner. Interacts with MSH5 and NBN.

The protein localises to the nucleus. It localises to the nucleolus. It is found in the chromosome. Its subcellular location is the centromere. Its function is as follows. Centromeric protein that plays a central role in the incorporation and maintenance of histone H3-like variant CENPA at centromeres. Acts as a specific chaperone for CENPA and is required for the incorporation of newly synthesized CENPA molecules into nucleosomes at replicated centromeres. Prevents CENPA-H4 tetramerization and prevents premature DNA binding by the CENPA-H4 tetramer. Directly binds Holliday junctions. The sequence is that of Holliday junction recognition protein (Hjurp) from Mus musculus (Mouse).